Consider the following 420-residue polypeptide: COP9 signalosome complex subunit 5 (420 aa).

The region spanning 73-208 (AALSALACMK…IGAFRTMPET (136 aa)) is the MPN domain. Residues His-154, His-156, and Asp-167 each coordinate Zn(2+). A JAMM motif motif is present at residues 154–167 (HSHPGYGCWLSGID).

This sequence belongs to the peptidase M67A family. CSN5 subfamily. As to quaternary structure, component of the COP9 signalosome (CSN) complex.

Its subcellular location is the cytoplasm. It is found in the nucleus. Functionally, catalytic component of the COP9 signalosome (CSN) complex that acts as an regulator of the ubiquitin (Ubl) conjugation pathway by mediating the deneddylation of the cullin subunit of SCF-type E3 ubiquitin-protein ligase complexes. The CSN complex is involved in the regulation of the mating pheromone response. In Eremothecium gossypii (strain ATCC 10895 / CBS 109.51 / FGSC 9923 / NRRL Y-1056) (Yeast), this protein is COP9 signalosome complex subunit 5 (RRI1).